The chain runs to 118 residues: NADH-quinone oxidoreductase subunit A (118 aa).

Transmembrane regions (helical) follow at residues 8–28 (ILIF…LNYL), 61–81 (FMYA…YPWA), and 86–106 (VLGL…VLGL).

Belongs to the complex I subunit 3 family. In terms of assembly, NDH-1 is composed of 14 different subunits. Subunits NuoA, H, J, K, L, M, N constitute the membrane sector of the complex.

It localises to the cell membrane. It carries out the reaction a quinone + NADH + 5 H(+)(in) = a quinol + NAD(+) + 4 H(+)(out). Functionally, NDH-1 shuttles electrons from NADH, via FMN and iron-sulfur (Fe-S) centers, to quinones in the respiratory chain. The immediate electron acceptor for the enzyme in this species is believed to be a menaquinone. Couples the redox reaction to proton translocation (for every two electrons transferred, four hydrogen ions are translocated across the cytoplasmic membrane), and thus conserves the redox energy in a proton gradient. The chain is NADH-quinone oxidoreductase subunit A from Carboxydothermus hydrogenoformans (strain ATCC BAA-161 / DSM 6008 / Z-2901).